We begin with the raw amino-acid sequence, 567 residues long: Phenylalanine--tRNA ligase beta subunit (567 aa).

The 76-residue stretch at 284 to 359 folds into the B5 domain; the sequence is FAVRTKHVSH…RAYDFNDLTP (76 aa). Residues Asp-337, Asp-343, Asp-346, and Asp-347 each coordinate Mg(2+).

This sequence belongs to the phenylalanyl-tRNA synthetase beta subunit family. Type 2 subfamily. Tetramer of two alpha and two beta subunits. The cofactor is Mg(2+).

It is found in the cytoplasm. It carries out the reaction tRNA(Phe) + L-phenylalanine + ATP = L-phenylalanyl-tRNA(Phe) + AMP + diphosphate + H(+). This chain is Phenylalanine--tRNA ligase beta subunit, found in Halobacterium salinarum (strain ATCC 29341 / DSM 671 / R1).